A 127-amino-acid polypeptide reads, in one-letter code: MMRQSVQTVLPESTGNNTLSLRDSVCRDLFQLFSSPHSPLPILLVSGMPEWQGHNQSDKLLQSWYCRQLRSALLFHEPRIAALQVNLKEAYCYELAISLEMMLYHDDEPLTFDLVWQKGSWHRTMPQ.

The protein belongs to the GpW/Gp25 family. IraD subfamily. Interacts with RssB.

It localises to the cytoplasm. Functionally, inhibits RpoS proteolysis by regulating RssB activity, thereby increasing the stability of the sigma stress factor RpoS during oxidative stress. Its effect on RpoS stability is due to its interaction with RssB, which probably blocks the interaction of RssB with RpoS, and the consequent delivery of the RssB-RpoS complex to the ClpXP protein degradation pathway. The protein is Anti-adapter protein IraD of Escherichia coli O6:K15:H31 (strain 536 / UPEC).